The sequence spans 155 residues: Conopressin/neurophysin (155 aa).

The N-terminal stretch at 1–26 (MMSSLCGMPLTYLLTAAVLSLSLTDA) is a signal peptide. A disulfide bond links Cys27 and Cys32. Position 35 is a glycine amide (Gly35). Intrachain disulfides connect Cys50–Cys94, Cys53–Cys67, Cys61–Cys84, Cys68–Cys74, Cys101–Cys115, Cys109–Cys127, and Cys116–Cys121. Asn88 is a glycosylation site (N-linked (GlcNAc...) asparagine).

It belongs to the vasopressin/oxytocin family. Seven disulfide bonds are present in neurophysin.

Its subcellular location is the secreted. The polypeptide is Conopressin/neurophysin (Lymnaea stagnalis (Great pond snail)).